The following is a 611-amino-acid chain: Putative type II restriction enzyme HgiDII (611 aa).

Residues 355–364 are compositionally biased toward basic and acidic residues; the sequence is YPSNPKKEEV. The interval 355–434 is disordered; that stretch reads YPSNPKKEEV…PEPSPPPKQE (80 aa). The span at 381-409 shows a compositional bias: low complexity; it reads TNASSDSSTATENASSDSSTATENASSET. A run of 2 repeats spans residues 382–392 and 393–403. The tract at residues 382–403 is 2.5 X 11 AA tandem repeats; it reads NASSDSSTATENASSDSSTATE. One copy of the 3; truncated repeat lies at 404–409; the sequence is NASSET. Over residues 410–425 the composition is skewed to acidic residues; the sequence is NDGEVEDNSFFDDDIP.

The catalysed reaction is Endonucleolytic cleavage of DNA to give specific double-stranded fragments with terminal 5'-phosphates.. Its function is as follows. According to REBASE this is a P subtype restriction enzyme that recognizes the double-stranded sequence 5'-GTCGAC-3' and cleaves after G-1. No restriction activity was detected upon overexpressing this protein in E.coli. The chain is Putative type II restriction enzyme HgiDII from Herpetosiphon aurantiacus (Herpetosiphon giganteus).